A 521-amino-acid polypeptide reads, in one-letter code: Cytochrome P450 1A1 (521 aa).

Residue Phe-229 participates in substrate binding. Cys-463 lines the heme pocket.

The protein belongs to the cytochrome P450 family. Heme is required as a cofactor.

Its subcellular location is the endoplasmic reticulum membrane. It localises to the microsome membrane. The enzyme catalyses an organic molecule + reduced [NADPH--hemoprotein reductase] + O2 = an alcohol + oxidized [NADPH--hemoprotein reductase] + H2O + H(+). Functionally, cytochromes P450 are a group of heme-thiolate monooxygenases. They oxidize a variety of structurally unrelated compounds, including steroids, fatty acids, and xenobiotics. The sequence is that of Cytochrome P450 1A1 (cyp1a1) from Chaetodon capistratus (Four-eye butterflyfish).